A 220-amino-acid chain; its full sequence is Catechol O-methyltransferase (220 aa).

Residues V44, E66, 68–69 (GT), S74, E92, and A121 contribute to the S-adenosyl-L-methionine site. D139 contributes to the a divalent metal cation binding site. Position 141 (D141) interacts with S-adenosyl-L-methionine. Positions 165 and 166 each coordinate a divalent metal cation.

The protein belongs to the class I-like SAM-binding methyltransferase superfamily. Cation-dependent O-methyltransferase family. Homodimer. Requires a divalent metal cation as cofactor.

The enzyme catalyses a catechol + S-adenosyl-L-methionine = a guaiacol + S-adenosyl-L-homocysteine + H(+). Inhibited by EDTA. In terms of biological role, catechol O-methyltransferase that can use various catechol-like compounds such as gallic acid (GA), 3,4-dihydroxy-5-methoxy-benzoic acid (5OMeBA), protocatechuic acid (PCA), 3,4-dihydroxy-benzaldehyde (DHA), dopamine, caffeic acid (CA), luteolin, quercetin, and 5-hydroxyuridine. The protein is Catechol O-methyltransferase of Mycobacterium tuberculosis (strain ATCC 25618 / H37Rv).